A 510-amino-acid chain; its full sequence is MIWHVQNENFILDSTRIFMKAFHLLLFNGSFIFPECILIFGLILLLMIDLTSDQKDRPWFYFISSTSLVISITALLFRWREEPIISFSGNFQTNNFNEIFQFLILLCSTLCIPLSVEYIECTEMAITEFLLFVLTATLGGMFLCGANDLITIFVALECFSLCSYLLSGYTKRDLRSNEATMKYLLMGGASSSILVYGFSWLYGLSGGEIELQEIVNGLINTQMYNSPGISIALIFITVGLGFKLSLAPFHQWTPDVYEGSPTPVVAFLSVTSKVAALALATRILDIPFYFSSNEWHLLLEILAILSMILGNLLAITQTSMKRMLAYSSIGQIGYVIIGIIVGDSNDGYASMITYMLFYISMNLGTFACIVLFGLRTGTDNIRDYAGLYMKDPFLALSLALCLLSLGGLPPLAGFFGKLYLFWCGWQAGLYFLVSIGLLTSVLSIYYYLKIIKLLMTGRNQEITPYVRNYRRSPLRSNNSIELSMTVCVIASTILGISMNPILAIAQDTLF.

A run of 14 helical transmembrane segments spans residues Phe31 to Thr51, Trp59 to Trp79, Ile99 to Ile119, Met124 to Cys144, Leu149 to Tyr169, Leu184 to Leu204, Ile229 to Phe249, Pro261 to Thr281, Trp295 to Ile315, Met323 to Asp343, Tyr354 to Leu374, Ala395 to Phe415, Leu418 to Leu438, and Met484 to Ile504.

This sequence belongs to the complex I subunit 2 family. As to quaternary structure, NDH is composed of at least 16 different subunits, 5 of which are encoded in the nucleus.

The protein localises to the plastid. Its subcellular location is the chloroplast thylakoid membrane. It carries out the reaction a plastoquinone + NADH + (n+1) H(+)(in) = a plastoquinol + NAD(+) + n H(+)(out). It catalyses the reaction a plastoquinone + NADPH + (n+1) H(+)(in) = a plastoquinol + NADP(+) + n H(+)(out). Its function is as follows. NDH shuttles electrons from NAD(P)H:plastoquinone, via FMN and iron-sulfur (Fe-S) centers, to quinones in the photosynthetic chain and possibly in a chloroplast respiratory chain. The immediate electron acceptor for the enzyme in this species is believed to be plastoquinone. Couples the redox reaction to proton translocation, and thus conserves the redox energy in a proton gradient. In Hordeum vulgare (Barley), this protein is NAD(P)H-quinone oxidoreductase subunit 2 B, chloroplastic.